The primary structure comprises 728 residues: FAD-dependent monooxygenase avaB (728 aa).

A helical transmembrane segment spans residues 17 to 37; the sequence is VIDLLLTFFFYSGLYGLIAAK. The span at 50 to 64 shows a compositional bias: polar residues; sequence NQQCENTDDVPQSFQ. A disordered region spans residues 50 to 72; the sequence is NQQCENTDDVPQSFQRPRDTRST. V168 contributes to the FAD binding site. Residue 490-491 coordinates NADP(+); sequence DL.

It belongs to the FAD-binding monooxygenase family. FAD serves as cofactor.

The protein resides in the membrane. The protein operates within secondary metabolite metabolism. In terms of biological role, multifunctional FAD-dependent monooxygenase; part of the cluster that mediates the biosynthesis of a highly modified cyclo-arginine-tryptophan dipeptide (cRW). Within the pathway, avaB uses the avaA cyclo-arginine-tryptophan dipeptide (cRW) as substrate to generate the cyclo-Arg-formylkynurenine diketopiperazine (DKP). AvaB also catalyzes an additional N-oxidation of the avaC product which is followed by cyclization and dehydration. The first step of the pathway is perfornmed by the arginine-containing cyclodipeptide synthase (RCPDS) avaA that acts as the scaffold-generating enzyme and is responsible for formation of the cyclo-Arg-Trp (cRW) diketopiperazine. AvaB then acts as a multifunctional flavoenzyme that is responsible for generating the cyclo-Arg-formylkynurenine DKP, which can be deformylated by avaC. AvaB then further catalyzes an additional N-oxidation followed by cyclization and dehydration. The next step is an N-acetylation of the guanidine group catalyzed by the arginine N-acetyltransferase avaD. The roles of the additional enzymes identified within the ava cluster still have to be determined. The protein is FAD-dependent monooxygenase avaB of Aspergillus versicolor.